A 581-amino-acid chain; its full sequence is Protein GAMETOPHYTE DEFECTIVE 1 (581 aa).

Positions 452–467 are enriched in polar residues; the sequence is SMNIESTSEGGSMSPS. The interval 452–512 is disordered; that stretch reads SMNIESTSEG…TTGHASNDEM (61 aa). Residues 496–512 show a composition bias toward basic and acidic residues; it reads ENSKERATTGHASNDEM.

It belongs to the eukaryotic/archaeal RNase P protein component 3 family. Probable component of nuclear RNase P and RNase MRP ribonucleoproteins. Interacts with POP5. As to expression, mostly expressed in inflorescence and roots, to a lower extent in leaves, and, at low levels, in siliques, seedlings and stems.

The protein resides in the nucleus. It localises to the nucleolus. The protein localises to the mitochondrion. Functionally, probable component of ribonuclease P, a ribonucleoprotein complex that generates mature tRNA molecules by cleaving their 5'-ends. May also be a component of the MRP ribonuclease complex, which cleaves pre-rRNA sequences. Required for female gametophyte development and male competence. The polypeptide is Protein GAMETOPHYTE DEFECTIVE 1 (Arabidopsis thaliana (Mouse-ear cress)).